Here is a 478-residue protein sequence, read N- to C-terminus: ATP synthase subunit beta (478 aa).

Position 158-165 (158-165 (GGAGVGKT)) interacts with ATP.

Belongs to the ATPase alpha/beta chains family. F-type ATPases have 2 components, CF(1) - the catalytic core - and CF(0) - the membrane proton channel. CF(1) has five subunits: alpha(3), beta(3), gamma(1), delta(1), epsilon(1). CF(0) has three main subunits: a(1), b(2) and c(9-12). The alpha and beta chains form an alternating ring which encloses part of the gamma chain. CF(1) is attached to CF(0) by a central stalk formed by the gamma and epsilon chains, while a peripheral stalk is formed by the delta and b chains.

It is found in the cell inner membrane. It catalyses the reaction ATP + H2O + 4 H(+)(in) = ADP + phosphate + 5 H(+)(out). Produces ATP from ADP in the presence of a proton gradient across the membrane. The catalytic sites are hosted primarily by the beta subunits. The polypeptide is ATP synthase subunit beta (Rhizobium leguminosarum bv. trifolii (strain WSM2304)).